Here is a 184-residue protein sequence, read N- to C-terminus: Photosystem I assembly protein Ycf4 (184 aa).

Transmembrane regions (helical) follow at residues 21–41 and 63–83; these read YFWA…GLSS and IIMT…WLTI.

It belongs to the Ycf4 family.

It is found in the plastid. The protein localises to the chloroplast thylakoid membrane. Its function is as follows. Seems to be required for the assembly of the photosystem I complex. In Gracilaria tenuistipitata var. liui (Red alga), this protein is Photosystem I assembly protein Ycf4.